The primary structure comprises 466 residues: Sushi repeat-containing protein SRPX2 (466 aa).

The first 24 residues, 1 to 24 (MKTGSLTQRGALLLLLLLAPAVTP), serve as a signal peptide directing secretion. Sushi domains follow at residues 70–120 (ATCY…YCRQ), 121–179 (MRCH…VCVD), and 263–322 (RRCP…VCTP). Disulfide bonds link cysteine 72-cysteine 106, cysteine 92-cysteine 118, cysteine 123-cysteine 164, and cysteine 150-cysteine 177. Positions 178–262 (VDIDPPKIRC…SCKFIVKVQV (85 aa)) constitute an HYR domain. 2 disulfide bridges follow: cysteine 265/cysteine 307 and cysteine 293/cysteine 320.

In terms of assembly, forms homooligomers. Interacts with PLAUR (via the UPAR/Ly6 domains), ADAMTS4 and CTSB. Interacts with HGF; the interaction increases the mitogenic activity of HGF. Post-translationally, contains chondroitin sulfate chains.

The protein localises to the secreted. Its subcellular location is the cytoplasm. It is found in the cell surface. It localises to the synapse. Acts as a ligand for the urokinase plasminogen activator surface receptor. Plays a role in angiogenesis by inducing endothelial cell migration and the formation of vascular network (cords). Involved in cellular migration and adhesion. Increases the phosphorylation levels of FAK. Interacts with and increases the mitogenic activity of HGF. Promotes synapse formation. This is Sushi repeat-containing protein SRPX2 from Rattus norvegicus (Rat).